Here is a 279-residue protein sequence, read N- to C-terminus: Tryptophan synthase alpha chain (279 aa).

Active-site proton acceptor residues include E50 and D61.

Belongs to the TrpA family. As to quaternary structure, tetramer of two alpha and two beta chains.

The catalysed reaction is (1S,2R)-1-C-(indol-3-yl)glycerol 3-phosphate + L-serine = D-glyceraldehyde 3-phosphate + L-tryptophan + H2O. It functions in the pathway amino-acid biosynthesis; L-tryptophan biosynthesis; L-tryptophan from chorismate: step 5/5. Its function is as follows. The alpha subunit is responsible for the aldol cleavage of indoleglycerol phosphate to indole and glyceraldehyde 3-phosphate. The protein is Tryptophan synthase alpha chain of Brucella anthropi (strain ATCC 49188 / DSM 6882 / CCUG 24695 / JCM 21032 / LMG 3331 / NBRC 15819 / NCTC 12168 / Alc 37) (Ochrobactrum anthropi).